The chain runs to 1915 residues: Cysteine repeat modular protein 2 (1915 aa).

A signal peptide spans 1 to 23 (MKFKKELINILALIFVLKKNIFA). FU repeat units follow at residues 53-98 (LGLC…QTYV), 104-151 (SCIC…GYTQ), 161-208 (QLLC…LQYK), 210-263 (NGIC…GYVV), and 267-315 (TQRC…GNYQ). N138 is a glycosylation site (N-linked (GlcNAc...) asparagine). N274, N279, and N316 each carry an N-linked (GlcNAc...) asparagine glycan. FU repeat units follow at residues 317–362 (SSLC…GFYT), 373–422 (QPIC…QTYY), 427–492 (TRSC…GFYQ), 496–546 (NNSC…SQNN), and 554–602 (TQAC…GTYM). N-linked (GlcNAc...) asparagine glycosylation occurs at N409. N-linked (GlcNAc...) asparagine glycans are attached at residues N496, N572, N603, and N621. FU repeat units follow at residues 606 to 639 (TNQCSLCGFGCSSCTNGTFNSCISCLNGYYLQQN), 640 to 686 (YNVC…GFYV), and 690 to 739 (QQAC…NECL). N-linked (GlcNAc...) asparagine glycosylation occurs at N742. FU repeat units follow at residues 760–814 (DGQC…GFYY) and 818–865 (NKQC…GYYQ). 5 N-linked (GlcNAc...) asparagine glycosylation sites follow: N909, N930, N1051, N1085, and N1193. In terms of domain architecture, EGF-like spans 1184 to 1224 (VQIPCDSNINCSGNGKCLWSQDNYNEILCICNINYAGRYCE). Disulfide bonds link C1188-C1200, C1194-C1212, and C1214-C1223. N-linked (GlcNAc...) asparagine glycans are attached at residues N1250, N1297, N1519, N1546, N1554, N1580, and N1596. Transmembrane regions (helical) follow at residues 1599–1619 (LLYALLIYIIFITIFIVISII), 1662–1682 (YAQLIINLFLYNAIFVLVYSL), 1704–1724 (STSVACSIVTYYLTICMVNLF), 1763–1783 (GLVFMLQAGMGIPIIILILSF), and 1796–1816 (FASFVIDNILDIIILISFCFI). N1867 is a glycosylation site (N-linked (GlcNAc...) asparagine).

The protein localises to the membrane. Required for mucocyst secretion. In Tetrahymena thermophila (strain SB210), this protein is Cysteine repeat modular protein 2.